Reading from the N-terminus, the 228-residue chain is Uracil-DNA glycosylase (228 aa).

Asp71 acts as the Proton acceptor in catalysis.

This sequence belongs to the uracil-DNA glycosylase (UDG) superfamily. UNG family.

It localises to the cytoplasm. The enzyme catalyses Hydrolyzes single-stranded DNA or mismatched double-stranded DNA and polynucleotides, releasing free uracil.. Functionally, excises uracil residues from the DNA which can arise as a result of misincorporation of dUMP residues by DNA polymerase or due to deamination of cytosine. The chain is Uracil-DNA glycosylase from Thermobifida fusca (strain YX).